Here is a 152-residue protein sequence, read N- to C-terminus: Small ribosomal subunit protein uS13 (152 aa).

The protein belongs to the universal ribosomal protein uS13 family. Part of the 30S ribosomal subunit. Forms a loose heterodimer with protein S19. Forms two bridges to the 50S subunit in the 70S ribosome.

Located at the top of the head of the 30S subunit, it contacts several helices of the 16S rRNA. In the 70S ribosome it contacts the 23S rRNA (bridge B1a) and protein L5 of the 50S subunit (bridge B1b), connecting the 2 subunits; these bridges are implicated in subunit movement. This chain is Small ribosomal subunit protein uS13, found in Pyrobaculum aerophilum (strain ATCC 51768 / DSM 7523 / JCM 9630 / CIP 104966 / NBRC 100827 / IM2).